The following is a 396-amino-acid chain: RNA polymerase principal sigma factor HrdA (396 aa).

The span at 1-20 (MRGGQRRASRLRPPTYRRRP) shows a compositional bias: basic residues. A disordered region spans residues 1-96 (MRGGQRRASR…PTRTESGGPS (96 aa)). Low complexity-rich tracts occupy residues 33–42 (QTQTLTQTDT) and 56–75 (LLAMPAQPGAGAALPHPGAP). The Polymerase core binding motif lies at 187–200 (DLVQEGNLGLIRAV). Residues 357 to 376 (LEEIGRLFGVTRERIRQIES) constitute a DNA-binding region (H-T-H motif).

The protein belongs to the sigma-70 factor family. As to quaternary structure, interacts transiently with the RNA polymerase catalytic core. Interacts with RNA polymerase-binding protein RbpA.

Functionally, sigma factors are initiation factors that promote the attachment of RNA polymerase to specific initiation sites and are then released. The protein is RNA polymerase principal sigma factor HrdA (hrdA) of Streptomyces coelicolor (strain ATCC BAA-471 / A3(2) / M145).